The sequence spans 208 residues: Interleukin-6 (208 aa).

The signal sequence occupies residues 1 to 29; sequence MNSLFTSAFSPLAVSLGLLLVMTSAFPTP. Residue N38 is glycosylated (N-linked (GlcNAc...) asparagine). A disulfide bridge connects residues C72 and C78. The residue at position 81 (S81) is a Phosphoserine. C101 and C111 are oxidised to a cystine.

It belongs to the IL-6 superfamily. As to quaternary structure, component of a hexamer of two molecules each of IL6, IL6R and IL6ST; first binds to IL6R to associate with the signaling subunit IL6ST. Interacts with IL6R (via the N-terminal ectodomain); this interaction may be affected by IL6R-binding with SORL1, hence decreasing IL6 cis signaling. Interacts with SORL1 (via the N-terminal ectodomain); this interaction leads to IL6 internalization and lysosomal degradation. May form a trimeric complex with the soluble SORL1 ectodomain and soluble IL6R receptor; this interaction might stabilize circulating IL6, hence promoting IL6 trans signaling.

It localises to the secreted. Cytokine with a wide variety of biological functions in immunity, tissue regeneration, and metabolism. Binds to IL6R, then the complex associates to the signaling subunit IL6ST/gp130 to trigger the intracellular IL6-signaling pathway. The interaction with the membrane-bound IL6R and IL6ST stimulates 'classic signaling', whereas the binding of IL6 and soluble IL6R to IL6ST stimulates 'trans-signaling'. Alternatively, 'cluster signaling' occurs when membrane-bound IL6:IL6R complexes on transmitter cells activate IL6ST receptors on neighboring receiver cells. In terms of biological role, IL6 is a potent inducer of the acute phase response. Rapid production of IL6 contributes to host defense during infection and tissue injury, but excessive IL6 synthesis is involved in disease pathology. In the innate immune response, is synthesized by myeloid cells, such as macrophages and dendritic cells, upon recognition of pathogens through toll-like receptors (TLRs) at the site of infection or tissue injury. In the adaptive immune response, is required for the differentiation of B cells into immunoglobulin-secreting cells. Plays a major role in the differentiation of CD4(+) T cell subsets. Essential factor for the development of T follicular helper (Tfh) cells that are required for the induction of germinal-center formation. Required to drive naive CD4(+) T cells to the Th17 lineage. Also required for proliferation of myeloma cells and the survival of plasmablast cells. Its function is as follows. Acts as an essential factor in bone homeostasis and on vessels directly or indirectly by induction of VEGF, resulting in increased angiogenesis activity and vascular permeability. Induces, through 'trans-signaling' and synergistically with IL1B and TNF, the production of VEGF. Involved in metabolic controls, is discharged into the bloodstream after muscle contraction increasing lipolysis and improving insulin resistance. 'Trans-signaling' in central nervous system also regulates energy and glucose homeostasis. Mediates, through GLP-1, crosstalk between insulin-sensitive tissues, intestinal L cells and pancreatic islets to adapt to changes in insulin demand. Also acts as a myokine. Plays a protective role during liver injury, being required for maintenance of tissue regeneration. Also has a pivotal role in iron metabolism by regulating HAMP/hepcidin expression upon inflammation or bacterial infection. Through activation of IL6ST-YAP-NOTCH pathway, induces inflammation-induced epithelial regeneration. The chain is Interleukin-6 (IL6) from Capra hircus (Goat).